A 124-amino-acid chain; its full sequence is Fluoride-specific ion channel FluC (124 aa).

4 helical membrane-spanning segments follow: residues I4–W24, G32–M52, I67–T87, and F96–L116. Residues G75 and T78 each coordinate Na(+).

This sequence belongs to the fluoride channel Fluc/FEX (TC 1.A.43) family.

Its subcellular location is the cell inner membrane. The enzyme catalyses fluoride(in) = fluoride(out). Its activity is regulated as follows. Na(+) is not transported, but it plays an essential structural role and its presence is essential for fluoride channel function. Functionally, fluoride-specific ion channel. Important for reducing fluoride concentration in the cell, thus reducing its toxicity. This is Fluoride-specific ion channel FluC from Geobacter metallireducens (strain ATCC 53774 / DSM 7210 / GS-15).